The chain runs to 1009 residues: DNA ligase 3 (1009 aa).

A mitochondrion-targeting transit peptide spans 1-42 (MSLAFKIFFPQTLRALSRKELCLFRKHHWRDVRQFSQWSETD). A PARP-type zinc finger spans residues 93–185 (FCVDYAKRGT…QITQHIADLS (93 aa)). Cys-105, Cys-108, His-139, and Cys-142 together coordinate Zn(2+). Phosphoserine is present on residues Ser-210, Ser-216, Ser-227, and Ser-242. Residues 224–256 (RKFSGFSAKPNNSGEAPSSPTPKRSLSSSKCDP) are disordered. A compositionally biased stretch (low complexity) spans 240 to 252 (PSSPTPKRSLSSS). Interaction with DNA stretches follow at residues 277-280 (PSYN), 318-323 (VYNLND), 388-391 (TKED), and 421-427 (KMNSGAK). Glu-506 is an ATP binding site. Lys-508 (N6-AMP-lysine intermediate) is an active-site residue. 2 residues coordinate ATP: Arg-513 and Arg-528. Mg(2+) is bound by residues Glu-560 and Glu-655. The ATP site is built by Lys-660, Arg-671, and Lys-675. Residues 842 to 917 (AGDEGSSTTG…LATKSSPVKV (76 aa)) are disordered. Composition is skewed to low complexity over residues 845–854 (EGSSTTGGSS) and 863–877 (SAVSRKAPSKPSAST). Positions 884–898 (LSNSNSKDGNMQTAK) are enriched in polar residues. Ser-913 bears the Phosphoserine mark. Residues 933–1009 (VLLDIFTGVR…IRKRRLVAPC (77 aa)) form the BRCT domain.

Belongs to the ATP-dependent DNA ligase family. In terms of assembly, isoform 3 interacts (via BRCT domain) with the nuclear DNA-repair protein XRCC1. Interacts with POLG. Interacts with POLB. Requires Mg(2+) as cofactor. As to expression, testis, thymus, prostate and heart.

It localises to the mitochondrion. Its subcellular location is the nucleus. It carries out the reaction ATP + (deoxyribonucleotide)n-3'-hydroxyl + 5'-phospho-(deoxyribonucleotide)m = (deoxyribonucleotide)n+m + AMP + diphosphate.. Functionally, isoform 3 functions as a heterodimer with DNA-repair protein XRCC1 in the nucleus and can correct defective DNA strand-break repair and sister chromatid exchange following treatment with ionizing radiation and alkylating agents. Isoform 1 is targeted to mitochondria, where it functions as a DNA ligase in mitochondrial base-excision DNA repair. This is DNA ligase 3 (LIG3) from Homo sapiens (Human).